The primary structure comprises 483 residues: Regulatory protein ViaA (483 aa).

The protein belongs to the ViaA family. In terms of assembly, homodimer. Interacts with RavA.

The protein localises to the cytoplasm. In terms of biological role, component of the RavA-ViaA chaperone complex, which may act on the membrane to optimize the function of some of the respiratory chains. ViaA stimulates the ATPase activity of RavA. This chain is Regulatory protein ViaA, found in Salmonella agona (strain SL483).